The chain runs to 608 residues: Prolactin receptor (608 aa).

Positions 1 to 19 (MSSALAYMLLVLSISLLNG) are cleaved as a signal peptide. The Extracellular portion of the chain corresponds to 20-229 (QSPPGKPEIH…EIPNDFTLKD (210 aa)). Fibronectin type-III domains follow at residues 22 to 122 (PPGK…IVEP) and 124 to 224 (PPRN…IPND). A disulfide bridge links cysteine 31 with cysteine 41. A glycan (N-linked (GlcNAc...) asparagine) is linked at asparagine 54. Cysteine 70 and cysteine 81 are disulfide-bonded. N-linked (GlcNAc...) asparagine glycosylation is found at asparagine 99 and asparagine 127. The Zn(2+) site is built by aspartate 206 and histidine 207. The short motif at 210 to 214 (WSRWG) is the WSXWS motif element. Residues 230–253 (TTVWIIVAVLSAVICLIMVWAVAL) traverse the membrane as a helical segment. Over 254 to 608 (KGYSMMTCIF…DPTCFMHSFH (355 aa)) the chain is Cytoplasmic. A Box 1 motif motif is present at residues 262–270 (IFPPVPGPK). Disordered regions lie at residues 317 to 355 (DERL…HSLL), 377 to 419 (KPEN…TRRS), and 466 to 487 (GAKS…EKGP). Basic and acidic residues predominate over residues 318-327 (ERLMPSHSKE). The span at 345 to 354 (GHGSYDSHSL) shows a compositional bias: low complexity. The span at 398 to 408 (CHTDTSKSTTW) shows a compositional bias: polar residues.

Belongs to the type I cytokine receptor family. Type 1 subfamily. Interacts with SMARCA1. Interacts with NEK3 and VAV2 and this interaction is prolactin-dependent.

The protein localises to the membrane. In terms of biological role, this is a receptor for the anterior pituitary hormone prolactin. The chain is Prolactin receptor (Prlr) from Mus musculus (Mouse).